Here is a 346-residue protein sequence, read N- to C-terminus: Phosphoribosylformylglycinamidine cyclo-ligase (346 aa).

The protein belongs to the AIR synthase family.

It is found in the cytoplasm. The enzyme catalyses 2-formamido-N(1)-(5-O-phospho-beta-D-ribosyl)acetamidine + ATP = 5-amino-1-(5-phospho-beta-D-ribosyl)imidazole + ADP + phosphate + H(+). It functions in the pathway purine metabolism; IMP biosynthesis via de novo pathway; 5-amino-1-(5-phospho-D-ribosyl)imidazole from N(2)-formyl-N(1)-(5-phospho-D-ribosyl)glycinamide: step 2/2. In Shewanella halifaxensis (strain HAW-EB4), this protein is Phosphoribosylformylglycinamidine cyclo-ligase.